Reading from the N-terminus, the 309-residue chain is tRNA dimethylallyltransferase (309 aa).

Residue Gly-13 to Ser-20 coordinates ATP. Thr-15–Ser-20 lines the substrate pocket.

This sequence belongs to the IPP transferase family. Monomer. Mg(2+) serves as cofactor.

It carries out the reaction adenosine(37) in tRNA + dimethylallyl diphosphate = N(6)-dimethylallyladenosine(37) in tRNA + diphosphate. Catalyzes the transfer of a dimethylallyl group onto the adenine at position 37 in tRNAs that read codons beginning with uridine, leading to the formation of N6-(dimethylallyl)adenosine (i(6)A). In Lacticaseibacillus casei (strain BL23) (Lactobacillus casei), this protein is tRNA dimethylallyltransferase.